The primary structure comprises 187 residues: UPF0340 protein SPT_0687 (187 aa).

Belongs to the UPF0340 family.

The sequence is that of UPF0340 protein SPT_0687 from Streptococcus pneumoniae (strain Taiwan19F-14).